A 485-amino-acid chain; its full sequence is Signal recognition particle protein (485 aa).

GTP-binding positions include Gly107–Thr114, Asp189–Arg193, and Thr247–Asp250. The disordered stretch occupies residues Gly452–Leu485. Over residues Lys471 to Leu485 the composition is skewed to basic residues.

This sequence belongs to the GTP-binding SRP family. SRP54 subfamily. In terms of assembly, part of the signal recognition particle protein translocation system, which is composed of SRP and FtsY.

Its subcellular location is the cytoplasm. It carries out the reaction GTP + H2O = GDP + phosphate + H(+). Functionally, involved in targeting and insertion of nascent membrane proteins into the cytoplasmic membrane. Binds to the hydrophobic signal sequence of the ribosome-nascent chain (RNC) as it emerges from the ribosomes. The SRP-RNC complex is then targeted to the cytoplasmic membrane where it interacts with the SRP receptor FtsY. The protein is Signal recognition particle protein of Synechococcus elongatus (strain ATCC 33912 / PCC 7942 / FACHB-805) (Anacystis nidulans R2).